A 103-amino-acid polypeptide reads, in one-letter code: uncharacterized protein (103 aa).

The protein resides in the mitochondrion. This is an uncharacterized protein from Claviceps purpurea (Ergot fungus).